The primary structure comprises 382 residues: Flap endonuclease 1-A (382 aa).

Positions 1–104 are N-domain; the sequence is MGIHGLAKLI…GELAKRSERR (104 aa). D34 lines the Mg(2+) pocket. Positions 47 and 70 each coordinate DNA. Mg(2+)-binding residues include D86, E158, E160, D179, and D181. The I-domain stretch occupies residues 122 to 253; sequence NIEKFTKRLV…KRAIDLIRQH (132 aa). Residue E158 coordinates DNA. DNA contacts are provided by G231 and D233. D233 is a binding site for Mg(2+). The interaction with PCNA stretch occupies residues 336 to 344; that stretch reads TQGRLDDFF. The disordered stretch occupies residues 350–382; the sequence is VSSTKRKEAESKGSAKKKAKTGGTPAGKFKRGK.

The protein belongs to the XPG/RAD2 endonuclease family. FEN1 subfamily. As to quaternary structure, interacts with PCNA. Three molecules of fen1 bind to one PCNA trimer with each molecule binding to one PCNA monomer. PCNA stimulates the nuclease activity without altering cleavage specificity. The cofactor is Mg(2+). Phosphorylated. Phosphorylation upon DNA damage induces relocalization to the nuclear plasma.

It is found in the nucleus. Its subcellular location is the nucleolus. The protein resides in the nucleoplasm. It localises to the mitochondrion. Structure-specific nuclease with 5'-flap endonuclease and 5'-3' exonuclease activities involved in DNA replication and repair. During DNA replication, cleaves the 5'-overhanging flap structure that is generated by displacement synthesis when DNA polymerase encounters the 5'-end of a downstream Okazaki fragment. It enters the flap from the 5'-end and then tracks to cleave the flap base, leaving a nick for ligation. Also involved in the long patch base excision repair (LP-BER) pathway, by cleaving within the apurinic/apyrimidinic (AP) site-terminated flap. Acts as a genome stabilization factor that prevents flaps from equilibrating into structures that lead to duplications and deletions. Also possesses 5'-3' exonuclease activity on nicked or gapped double-stranded DNA, and exhibits RNase H activity. Also involved in replication and repair of rDNA and in repairing mitochondrial DNA. In Xenopus laevis (African clawed frog), this protein is Flap endonuclease 1-A (fen1-a).